The following is a 147-amino-acid chain: uncharacterized protein (147 aa).

This is an uncharacterized protein from Escherichia coli.